Here is a 200-residue protein sequence, read N- to C-terminus: uncharacterized protein (200 aa).

This is an uncharacterized protein from Saccharomyces cerevisiae (strain ATCC 204508 / S288c) (Baker's yeast).